The sequence spans 357 residues: Heat-inducible transcription repressor HrcA (357 aa).

The protein belongs to the HrcA family.

Negative regulator of class I heat shock genes (grpE-dnaK-dnaJ and groELS operons). Prevents heat-shock induction of these operons. The chain is Heat-inducible transcription repressor HrcA from Chlorobium luteolum (strain DSM 273 / BCRC 81028 / 2530) (Pelodictyon luteolum).